Consider the following 143-residue polypeptide: MFDFDATLPLMALQFVVLAFLLNAIFYKPMNKVLDERADYIRTNEEDARERLAKAKAITQEYEQQITDARRQSQAVIADAQAEARRLAAEKIAEAQRESQRQKETAAQEIEAQRQSALSSLEQEVAALSNQILHKLLGPELIK.

Residues 6-26 (ATLPLMALQFVVLAFLLNAIF) traverse the membrane as a helical segment.

It belongs to the ATPase B chain family. As to quaternary structure, F-type ATPases have 2 components, F(1) - the catalytic core - and F(0) - the membrane proton channel. F(1) has five subunits: alpha(3), beta(3), gamma(1), delta(1), epsilon(1). F(0) has four main subunits: a(1), b(1), b'(1) and c(10-14). The alpha and beta chains form an alternating ring which encloses part of the gamma chain. F(1) is attached to F(0) by a central stalk formed by the gamma and epsilon chains, while a peripheral stalk is formed by the delta, b and b' chains.

It localises to the cellular thylakoid membrane. Functionally, f(1)F(0) ATP synthase produces ATP from ADP in the presence of a proton or sodium gradient. F-type ATPases consist of two structural domains, F(1) containing the extramembraneous catalytic core and F(0) containing the membrane proton channel, linked together by a central stalk and a peripheral stalk. During catalysis, ATP synthesis in the catalytic domain of F(1) is coupled via a rotary mechanism of the central stalk subunits to proton translocation. Component of the F(0) channel, it forms part of the peripheral stalk, linking F(1) to F(0). The b'-subunit is a diverged and duplicated form of b found in plants and photosynthetic bacteria. The chain is ATP synthase subunit b' from Synechocystis sp. (strain ATCC 27184 / PCC 6803 / Kazusa).